Here is a 279-residue protein sequence, read N- to C-terminus: Undecaprenyl-diphosphatase (279 aa).

8 consecutive transmembrane segments (helical) span residues 2-22 (LFIELLKAIFFGVIEGVTEWL), 44-64 (AFMEMFNIVIQLGAIIAVIVI), 85-105 (WQLWLKVAIACIPSIIIAVPL), 113-133 (FNHMLPIAIALIVYGVAFLWI), 163-183 (VLSIIPGTSRSGATILGAIIL), 188-208 (TVAADFTFFLAIPTMFGYSGL), 225-245 (LLVLLVASLTAFAVSLYVIKL), and 255-275 (FTVFGRYRIVLGSLLIVYSVF).

Belongs to the UppP family.

It localises to the cell membrane. It catalyses the reaction di-trans,octa-cis-undecaprenyl diphosphate + H2O = di-trans,octa-cis-undecaprenyl phosphate + phosphate + H(+). Functionally, catalyzes the dephosphorylation of undecaprenyl diphosphate (UPP). Confers resistance to bacitracin. The polypeptide is Undecaprenyl-diphosphatase (Streptococcus equi subsp. zooepidemicus (strain H70)).